The following is a 622-amino-acid chain: Pyranose 2-oxidase (622 aa).

A signal peptide spans Met-1–His-28. Positions Ser-29–Gly-37 are excised as a propeptide. His-167 carries the post-translational modification Tele-8alpha-FAD histidine. 2 residues coordinate substrate: Gln-449 and His-451. His-546 (proton acceptor) is an active-site residue. Asn-591 is an active-site residue.

This sequence belongs to the GMC oxidoreductase family. In terms of assembly, homotetramer. Requires FAD as cofactor.

It is found in the periplasm. The enzyme catalyses D-glucose + O2 = 2-dehydro-D-glucose + H2O2. Its function is as follows. Catalyzes the oxidation of various aldopyranoses and disaccharides on carbon-2 to the corresponding 2-keto sugars concomitant with the reduction of O(2) to H(2)O(2). Plays an important role in lignin degradation of wood rot fungi by supplying the essential cosubstrate H(2)O(2) for the ligninolytic peroxidases, lignin peroxidase and manganese-dependent peroxidase. The preferred substrate is D-glucose which is converted to 2-dehydro-D-glucose, an intermediate of a secondary metabolic pathway leading to the antibiotic cortalcerone. Also acts on D-xylose, together with D-glucose the major sugars derived from wood, on L-sorbose, D-galactose and 1,5-anhydroglucitol, a diagnostic marker of diabetes mellitus. The polypeptide is Pyranose 2-oxidase (P2OX) (Trametes hirsuta (White-rot fungus)).